We begin with the raw amino-acid sequence, 319 residues long: Lambda-crystallin homolog (319 aa).

A2 is subject to N-acetylalanine. Position 3 is a phosphoserine (S3). Residues 16 to 17 (VI), D36, E97, and K102 each bind NAD(+). Residue S111 is modified to Phosphoserine.

Belongs to the 3-hydroxyacyl-CoA dehydrogenase family. In terms of assembly, homodimer. In terms of tissue distribution, widely expressed, with highest levels in liver and kidney.

It is found in the cytoplasm. The enzyme catalyses L-gulonate + NAD(+) = 3-dehydro-L-gulonate + NADH + H(+). With respect to regulation, inhibited by malonate. Its function is as follows. Has high L-gulonate 3-dehydrogenase activity. It also exhibits low dehydrogenase activity toward L-3-hydroxybutyrate (HBA) and L-threonate. The polypeptide is Lambda-crystallin homolog (CRYL1) (Homo sapiens (Human)).